A 241-amino-acid polypeptide reads, in one-letter code: Nopaline transport system permease protein NocM (241 aa).

In terms of domain architecture, ABC transmembrane type-1 spans 17–215; that stretch reads VPTTLTLAFI…FITFVVSRLV (199 aa). The next 5 helical transmembrane spans lie at 21 to 41, 52 to 72, 95 to 115, 161 to 181, and 191 to 211; these read LTLA…VALM, LAYG…MFLI, PWFC…SEII, VMLI…EVTG, and YSPV…TFVV.

The protein belongs to the binding-protein-dependent transport system permease family. HisMQ subfamily.

The protein resides in the cell inner membrane. Its function is as follows. Component of the nopaline active transport system probably consisting of four subunits: Q, M, P and T. This system is also capable of transporting octopine provided that catabolic functions are induced with nopaline. The protein is Nopaline transport system permease protein NocM (nocM) of Agrobacterium fabrum (strain C58 / ATCC 33970) (Agrobacterium tumefaciens (strain C58)).